A 361-amino-acid polypeptide reads, in one-letter code: Queuine tRNA-ribosyltransferase (361 aa).

The active-site Proton acceptor is the Asp92. Substrate is bound by residues 92 to 96, Asp146, Gln189, and Gly216; that span reads DSGGF. The RNA binding stretch occupies residues 247 to 253; it reads GVGKPAD. Asp266 functions as the Nucleophile in the catalytic mechanism. The interval 271–275 is RNA binding; important for wobble base 34 recognition; sequence TRSGR. Zn(2+) is bound by residues Cys304, Cys306, Cys309, and His335.

The protein belongs to the queuine tRNA-ribosyltransferase family. In terms of assembly, homodimer. Within each dimer, one monomer is responsible for RNA recognition and catalysis, while the other monomer binds to the replacement base PreQ1. The cofactor is Zn(2+).

It carries out the reaction 7-aminomethyl-7-carbaguanine + guanosine(34) in tRNA = 7-aminomethyl-7-carbaguanosine(34) in tRNA + guanine. Its pathway is tRNA modification; tRNA-queuosine biosynthesis. Catalyzes the base-exchange of a guanine (G) residue with the queuine precursor 7-aminomethyl-7-deazaguanine (PreQ1) at position 34 (anticodon wobble position) in tRNAs with GU(N) anticodons (tRNA-Asp, -Asn, -His and -Tyr). Catalysis occurs through a double-displacement mechanism. The nucleophile active site attacks the C1' of nucleotide 34 to detach the guanine base from the RNA, forming a covalent enzyme-RNA intermediate. The proton acceptor active site deprotonates the incoming PreQ1, allowing a nucleophilic attack on the C1' of the ribose to form the product. After dissociation, two additional enzymatic reactions on the tRNA convert PreQ1 to queuine (Q), resulting in the hypermodified nucleoside queuosine (7-(((4,5-cis-dihydroxy-2-cyclopenten-1-yl)amino)methyl)-7-deazaguanosine). The chain is Queuine tRNA-ribosyltransferase from Rickettsia peacockii (strain Rustic).